Reading from the N-terminus, the 91-residue chain is Potassium channel toxin TdiKIK (91 aa).

Positions 1–25 are cleaved as a signal peptide; sequence MVATNRCCVFALLVALLLIHSLAEA. The propeptide occupies 26-44; it reads GKGKEVLGKIKNKLVEVKE. The BetaSPN-type CS-alpha/beta domain maps to 58–91; the sequence is EYACPVIDKFCEDHCAAKNAIGKCDDFKCQCLNS. 3 disulfide bridges follow: Cys-61-Cys-81, Cys-68-Cys-86, and Cys-72-Cys-88.

As to expression, expressed by the venom gland.

The protein resides in the secreted. Functionally, the full peptide presents antibacterial and cytotoxic activities. The synthetic C-terminus (AA 33-76) inhibits voltage-gated potassium channels Kv1.1/KCNA1, Kv1.2/KCNA2, and Kv1.3/KCNA3. The polypeptide is Potassium channel toxin TdiKIK (Tityus discrepans (Venezuelan scorpion)).